The chain runs to 623 residues: Kelch repeat and BTB domain-containing protein 12 (623 aa).

The BTB domain occupies 25–92 (TDVVLVAEGV…MYSSNLPLTA (68 aa)). The BACK domain maps to 127-236 (CLGIYYYARD…GVDYLKGTMK (110 aa)). Kelch repeat units follow at residues 390 to 440 (NLYL…RMKG), 441 to 496 (RLYV…ALNG), 498 to 551 (IYVL…ASNA), and 557 to 607 (KLYV…LVAN).

The polypeptide is Kelch repeat and BTB domain-containing protein 12 (kbtbd12) (Danio rerio (Zebrafish)).